The primary structure comprises 113 residues: Signal peptidase complex subunit 1 (113 aa).

Topologically, residues 1-32 (MDGMIAMLPAPLQQLSSHIDFQGQKVAERTYQ) are cytoplasmic. Residues 33–53 (VILTLAGIIGFFVGYSTQQLS) form a helical membrane-spanning segment. Over 54–57 (YAMY) the chain is Lumenal. Residues 58–78 (TVMGAAVFTALIILPPWPFLF) traverse the membrane as a helical segment. At 79–113 (RKNPIVWQTPIEEQEASSSSDNEKKDKKKETKKTK) the chain is on the cytoplasmic side. The tract at residues 89–113 (IEEQEASSSSDNEKKDKKKETKKTK) is disordered.

It belongs to the SPCS1 family. In terms of assembly, component of the signal peptidase complex (SPC) composed of a catalytic subunit sec-11 and three accessory subunits spcs-1, spcs-2 and spcs-3. The complex induces a local thinning of the ER membrane which is used to measure the length of the signal peptide (SP) h-region of protein substrates. This ensures the selectivity of the complex towards h-regions shorter than 18-20 amino acids.

The protein resides in the endoplasmic reticulum membrane. Its function is as follows. Component of the signal peptidase complex (SPC) which catalyzes the cleavage of N-terminal signal sequences from nascent proteins as they are translocated into the lumen of the endoplasmic reticulum. Dispensable for SPC enzymatic activity. This Caenorhabditis briggsae protein is Signal peptidase complex subunit 1.